A 358-amino-acid chain; its full sequence is Insulin gene enhancer protein isl-2b (358 aa).

LIM zinc-binding domains lie at 27 to 80 (CVGC…CKRD) and 89 to 143 (CAKC…RADH). Residues 191 to 250 (TTRVRTVLNEKQLHTLRTCYNANPRPDALMKEQLVEMTGLSPRVIRVWFQNKRCKDKKRS) constitute a DNA-binding region (homeobox). Residues 325–335 (ESGSLGNSSGS) are compositionally biased toward low complexity. A disordered region spans residues 325–358 (ESGSLGNSSGSDVTSLSSQLPDTPNSMVPSPVET). Positions 336 to 358 (DVTSLSSQLPDTPNSMVPSPVET) are enriched in polar residues.

The protein localises to the nucleus. In terms of biological role, binds to one of the cis-acting domain of the insulin gene enhancer. May be involved in the regional specification of the myotome and also in target recognition by the caudal primary neuron. The protein is Insulin gene enhancer protein isl-2b (isl2b) of Danio rerio (Zebrafish).